The following is a 506-amino-acid chain: MKNRDRILVKIDKLREKRDILCQQRFLYTIPFQEDIYAIAYTRSSKKSNLNLLENSVLYKKYSVITIKRLITQLRQQNFLKIFFRDCYRNQLDNPKNHPYNKLLLEGLILILEVFSPIQIQLGRNEWKSLQSIHSLFLFMENKFLHSNFILDIKIPQSLHPEILIRIFRRRIQDTPFLHLSRSILHEYQDPITSDTSISPFSREQNSLLILLWNYYVYEFEYLVVSSWKRFSRLQSIFSLDRIDRTHFDRKIKHVIRPYWIISSKISSFTKNPCIHYVRYKNHSVLAFQGTNYLAKKWRNYLLNFWQYHFHCWVQPHRIFLKRFSRNSFSFLGYILGIRTRINKVQAKMEDELPITCLITKELCPIIPFLLLVNSLARGGFCTNLGRPVSKLSWTTLTDDDILKKFDQIWRSVYYYYSGSINNHGLFRLRYIFRFSCAKTLACKHKSTTRIVWKRFSLNSFLRSFLKKPELVNSSVSKYYLHKRRFWYLDIIQINPLTISLRERYN.

This sequence belongs to the intron maturase 2 family. MatK subfamily.

It is found in the plastid. It localises to the chloroplast. Functionally, usually encoded in the trnK tRNA gene intron. Probably assists in splicing its own and other chloroplast group II introns. In Angiopteris evecta (Mule's foot fern), this protein is Maturase K.